The following is a 466-amino-acid chain: Nuclear pore complex protein Nup50 (466 aa).

Positions 1 to 14 (MAKRVAEKELTDRN) are enriched in basic and acidic residues. A disordered region spans residues 1-22 (MAKRVAEKELTDRNWDEEDEVE). Lys-8 bears the N6-acetyllysine mark. The residue at position 52 (Ser-52) is a Phosphoserine. Copy 1 of the repeat occupies 76–77 (FG). Residues 76 to 302 (FGGSGGKPLE…FSAGSSSLFG (227 aa)) are 5 X 2 AA repeats of F-G. Position 82 is an N6-acetyllysine (Lys-82). Repeat 2 spans residues 112 to 113 (FG). Lys-126 is subject to N6-acetyllysine. 2 disordered regions span residues 128–150 (ISSP…STAC) and 200–257 (LENG…AEKK). Polar residues predominate over residues 131–150 (PKCNNSNQPPSSGPASSTAC). Positions 143–205 (GPASSTACPG…IEKQLENGGG (63 aa)) are binding to CDKN1B. Position 208 is a phosphoserine (Ser-208). The stretch at 225–226 (FG) is repeat 3. A compositionally biased stretch (polar residues) spans 225–235 (FGSTKLQQESP). Position 234 is a phosphoserine (Ser-234). Residues 241–257 (NKAEDTSEKVEFTAEKK) show a composition bias toward basic and acidic residues. Thr-246 carries the phosphothreonine modification. Position 268 is a phosphoserine (Ser-268). The stretch at 271-272 (FG) is repeat 4. Ser-294 bears the Phosphoserine mark. Residues 301-302 (FG) form repeat 5. The segment at 316–343 (SAKASESPAGGGSSECRDGEEEENDEPP) is disordered. In terms of domain architecture, RanBD1 spans 333 to 466 (DGEEEENDEP…HKILLEKKDA (134 aa)). Residue Lys-351 forms a Glycyl lysine isopeptide (Lys-Gly) (interchain with G-Cter in SUMO2) linkage. Lys-448 is modified (N6-acetyllysine).

Does not interact with TPR. Interacts with Importin alpha-2, Importin beta, Importin beta-2, NUP153, Ran binding protein 7, CDKN1B and itself. Widely expressed at low levels. Highest in the developing neural tube and adult testes.

The protein resides in the nucleus. Its subcellular location is the nuclear pore complex. It is found in the nucleus membrane. Its function is as follows. Component of the nuclear pore complex that has a direct role in nuclear protein import. Actively displaces NLSs from importin-alpha, and facilitates disassembly of the importin-alpha:beta-cargo complex and importin recycling. Interacts with regulatory proteins of cell cycle progression including CDKN1B. This interaction is required for correct intracellular transport and degradation of CDKN1B. This is Nuclear pore complex protein Nup50 (Nup50) from Mus musculus (Mouse).